The primary structure comprises 272 residues: Ribosomal RNA small subunit methyltransferase A (272 aa).

6 residues coordinate S-adenosyl-L-methionine: His-11, Leu-13, Gly-38, Glu-59, Asp-84, and Asn-109.

Belongs to the class I-like SAM-binding methyltransferase superfamily. rRNA adenine N(6)-methyltransferase family. RsmA subfamily.

The protein resides in the cytoplasm. The enzyme catalyses adenosine(1518)/adenosine(1519) in 16S rRNA + 4 S-adenosyl-L-methionine = N(6)-dimethyladenosine(1518)/N(6)-dimethyladenosine(1519) in 16S rRNA + 4 S-adenosyl-L-homocysteine + 4 H(+). Specifically dimethylates two adjacent adenosines (A1518 and A1519) in the loop of a conserved hairpin near the 3'-end of 16S rRNA in the 30S particle. May play a critical role in biogenesis of 30S subunits. The polypeptide is Ribosomal RNA small subunit methyltransferase A (Rippkaea orientalis (strain PCC 8801 / RF-1) (Cyanothece sp. (strain PCC 8801))).